The sequence spans 418 residues: 3-isopropylmalate dehydratase large subunit 1 (418 aa).

[4Fe-4S] cluster is bound by residues C298, C358, and C361.

This sequence belongs to the aconitase/IPM isomerase family. LeuC type 2 subfamily. Heterodimer of LeuC and LeuD. [4Fe-4S] cluster serves as cofactor.

The enzyme catalyses (2R,3S)-3-isopropylmalate = (2S)-2-isopropylmalate. The protein operates within amino-acid biosynthesis; L-leucine biosynthesis; L-leucine from 3-methyl-2-oxobutanoate: step 2/4. Functionally, catalyzes the isomerization between 2-isopropylmalate and 3-isopropylmalate, via the formation of 2-isopropylmaleate. This is 3-isopropylmalate dehydratase large subunit 1 from Methanopyrus kandleri (strain AV19 / DSM 6324 / JCM 9639 / NBRC 100938).